Consider the following 1043-residue polypeptide: Beta-klotho (1043 aa).

Over 1–994 (MKTGCAAGSP…ICSFLVEKKP (994 aa)) the chain is Extracellular. 2 glycosyl hydrolase-1 regions span residues 77–506 (LYDT…DNGF) and 515–965 (MKGR…SSGL). 12 N-linked (GlcNAc...) asparagine glycosylation sites follow: Asn-84, Asn-122, Asn-161, Asn-211, Asn-262, Asn-308, Asn-389, Asn-552, Asn-609, Asn-700, Asn-704, and Asn-837. A helical membrane pass occupies residues 995–1015 (LIFFGCCFISTLAVLLSITVF). Over 1016 to 1043 (HHQKRRKFQKARNLQNIPLKKGHSRVFS) the chain is Cytoplasmic.

The protein belongs to the glycosyl hydrolase 1 family. Klotho subfamily. In terms of assembly, interacts with FGF19; this interaction is direct. Interacts (via C-terminus) with FGF21; this interaction is direct. Interacts with FGFR1 and FGFR4. Present in liver, muscle and white adipose tissue, but not in kidney (at protein level). Expressed in liver and pancreas, and at lower levels in skin, stomach, skeletal muscle, small intestine and lung.

The protein resides in the cell membrane. Functionally, contributes to the transcriptional repression of cholesterol 7-alpha-hydroxylase (CYP7A1), the rate-limiting enzyme in bile acid synthesis. Probably inactive as a glycosidase. Increases the ability of FGFR1 and FGFR4 to bind FGF21. The sequence is that of Beta-klotho (Klb) from Mus musculus (Mouse).